Here is a 139-residue protein sequence, read N- to C-terminus: D-ribose pyranase (139 aa).

The Proton donor role is filled by H20. Residues D28, H106, and 128–130 each bind substrate; that span reads YAN.

The protein belongs to the RbsD / FucU family. RbsD subfamily. Homodecamer.

Its subcellular location is the cytoplasm. It catalyses the reaction beta-D-ribopyranose = beta-D-ribofuranose. Its pathway is carbohydrate metabolism; D-ribose degradation; D-ribose 5-phosphate from beta-D-ribopyranose: step 1/2. Catalyzes the interconversion of beta-pyran and beta-furan forms of D-ribose. This is D-ribose pyranase from Salmonella agona (strain SL483).